The following is a 905-amino-acid chain: Phosphatidylethanolamine N-methyltransferase (905 aa).

Polar residues-rich tracts occupy residues 1–22 (MTNQ…STSV) and 40–58 (DSNG…SSLN). A disordered region spans residues 1–73 (MTNQIPSASS…SEPERYGCTP (73 aa)). Residues 1-104 (MTNQIPSASS…DPRFSKTPWD (104 aa)) lie on the Lumenal side of the membrane. The helical transmembrane segment at 105-125 (WIVISSILAQVLLFFMTTGAV) threads the bilayer. At 126–128 (RRY) the chain is on the cytoplasmic side. Residues 129-149 (SMMLCFFFWRISYDAGIGFLL) form a helical membrane-spanning segment. Over 150–209 (HMQSNHRKVVTWISDFGFFDKENHPKLYDLTKKQLISKMDSSYNYDTSPLEFNSWLVFRH) the chain is Lumenal. Residues 210–230 (FVDLILMCDFCSYILMGLAWT) form a helical membrane-spanning segment. At 231 to 236 (CWPKVN) the chain is on the cytoplasmic side. The chain crosses the membrane as a helical span at residues 237 to 257 (IILQFLRIFGGIALIVFNYWV). At 258–268 (KMDAHRVVRDY) the chain is on the lumenal side. Residues 269-289 (AWYWGDFFFLLRSSLVFNGVF) traverse the membrane as a helical segment. The Cytoplasmic portion of the chain corresponds to 290-313 (ELAPHPMYSVGYAGYYGMSLLTGS). A helical membrane pass occupies residues 314 to 334 (YAVLFASILAHAAQFGFLLFV). Residues 335 to 379 (ENPHIERTYGTDINHARLSPRGEDNEFELPPEHDLVGFVNFDFTR) are Lumenal-facing. Serine 353 carries the phosphoserine modification. The chain crosses the membrane as a helical span at residues 380–400 (ISDVALLIIALYSIFIILLSS). Residues 401-408 (NSHYSQFW) are Cytoplasmic-facing. The helical transmembrane segment at 409–429 (AIFQAFVWRFLHSIIHAFILF) threads the bilayer. Over 430 to 456 (YQSKSKAWTKHFIRNGESAAYAWSQWK) the chain is Lumenal. A helical membrane pass occupies residues 457–479 (GLYNLTLNMSYISFVMAAWKLYH). The Cytoplasmic segment spans residues 480 to 493 (LPSNWTYGLVSLRH). The helical transmembrane segment at 494-514 (ALGFGLIALHIYTSVSIYEDL) threads the bilayer. Over 515–552 (GQYGWFYGDFFLPSRSPKLVYQGIYRYVNNPERFLGCS) the chain is Lumenal. Residues 553 to 573 (AYWGLALISSSAWIFLIAILA) traverse the membrane as a helical segment. Topologically, residues 574 to 905 (QLSNLAIIRL…FDGPSGAKDD (332 aa)) are cytoplasmic.

The protein belongs to the class VI-like SAM-binding methyltransferase superfamily. CHO2 family.

Its subcellular location is the endoplasmic reticulum membrane. The enzyme catalyses a 1,2-diacyl-sn-glycero-3-phosphoethanolamine + S-adenosyl-L-methionine = a 1,2-diacyl-sn-glycero-3-phospho-N-methylethanolamine + S-adenosyl-L-homocysteine + H(+). It participates in phospholipid metabolism; phosphatidylcholine biosynthesis. Its function is as follows. Catalyzes the first step of the methylation pathway of phosphatidylcholine biosynthesis, the SAM-dependent methylation of phosphatidylethanolamine (PE) to phosphatidylmonomethylethanolamine (PMME). This chain is Phosphatidylethanolamine N-methyltransferase, found in Schizosaccharomyces pombe (strain 972 / ATCC 24843) (Fission yeast).